Consider the following 192-residue polypeptide: uncharacterized protein (192 aa).

The Nudix hydrolase domain maps to 29–160 (HRQAAVLIPI…PLDIYRRGDS (132 aa)). A Nudix box motif is present at residues 67-89 (GAVDDTDASVIAAALREAEEEVA). Mg(2+) contacts are provided by E83 and E87.

This sequence belongs to the Nudix hydrolase family. PCD1 subfamily. Mn(2+) serves as cofactor. The cofactor is Mg(2+).

Its function is as follows. Probably mediates the hydrolysis of some nucleoside diphosphate derivatives. This is an uncharacterized protein from Shigella boydii serotype 4 (strain Sb227).